Reading from the N-terminus, the 513-residue chain is uncharacterized protein (513 aa).

The tract at residues 1–48 (MGSSEEQSVPGDDFYEESGDLNTGLSLVLRPAKSNEGESSLSSPKGSK) is disordered. Residues 37-48 (GESSLSSPKGSK) show a composition bias toward polar residues. 3 positions are modified to phosphoserine: Ser-43, Ser-84, and Ser-123. 4 disordered regions span residues 210–229 (DGNH…GDLA), 236–287 (TRDS…GSKS), 390–414 (AKED…AEPP), and 453–481 (SVLS…TQGC).

This is an uncharacterized protein from Mus musculus (Mouse).